Consider the following 316-residue polypeptide: Ribosomal protein L11 methyltransferase (316 aa).

S-adenosyl-L-methionine contacts are provided by threonine 161, glycine 182, aspartate 204, and asparagine 249.

This sequence belongs to the methyltransferase superfamily. PrmA family.

It localises to the cytoplasm. The catalysed reaction is L-lysyl-[protein] + 3 S-adenosyl-L-methionine = N(6),N(6),N(6)-trimethyl-L-lysyl-[protein] + 3 S-adenosyl-L-homocysteine + 3 H(+). In terms of biological role, methylates ribosomal protein L11. The protein is Ribosomal protein L11 methyltransferase of Ruminiclostridium cellulolyticum (strain ATCC 35319 / DSM 5812 / JCM 6584 / H10) (Clostridium cellulolyticum).